The chain runs to 124 residues: Sulfur globule protein CV2 (124 aa).

An N-terminal signal peptide occupies residues 1-22; sequence MKKLATAAAVAALLGASASASA.

As to quaternary structure, the protein envelope of the sulfur globules is composed of the three different proteins CV1, CV2 and CV3.

In terms of biological role, structural protein of the sulfur globules, which are intracellular globules that serve for sulfur storage in purple sulfur bacteria. The sequence is that of Sulfur globule protein CV2 (sgpB) from Allochromatium vinosum (strain ATCC 17899 / DSM 180 / NBRC 103801 / NCIMB 10441 / D) (Chromatium vinosum).